Consider the following 257-residue polypeptide: Cilia- and flagella-associated protein 300 (257 aa).

Belongs to the CFAP300 family.

Its subcellular location is the cytoplasm. The protein resides in the cytoskeleton. It is found in the flagellum axoneme. In terms of biological role, cilium- and flagellum-specific protein that plays a role in axonemal structure organization and motility. Plays a role in outer and inner dynein arm assembly. The protein is Cilia- and flagella-associated protein 300 of Chlamydomonas reinhardtii (Chlamydomonas smithii).